The primary structure comprises 214 residues: Thiamine-phosphate synthase (214 aa).

4-amino-2-methyl-5-(diphosphooxymethyl)pyrimidine-binding positions include 37-41 (QYREK) and N73. D74 and D93 together coordinate Mg(2+). S112 is a 4-amino-2-methyl-5-(diphosphooxymethyl)pyrimidine binding site. Position 139-141 (139-141 (TIS)) interacts with 2-[(2R,5Z)-2-carboxy-4-methylthiazol-5(2H)-ylidene]ethyl phosphate. K142 serves as a coordination point for 4-amino-2-methyl-5-(diphosphooxymethyl)pyrimidine. Residues G171 and 191 to 192 (IS) each bind 2-[(2R,5Z)-2-carboxy-4-methylthiazol-5(2H)-ylidene]ethyl phosphate.

This sequence belongs to the thiamine-phosphate synthase family. The cofactor is Mg(2+).

The enzyme catalyses 2-[(2R,5Z)-2-carboxy-4-methylthiazol-5(2H)-ylidene]ethyl phosphate + 4-amino-2-methyl-5-(diphosphooxymethyl)pyrimidine + 2 H(+) = thiamine phosphate + CO2 + diphosphate. The catalysed reaction is 2-(2-carboxy-4-methylthiazol-5-yl)ethyl phosphate + 4-amino-2-methyl-5-(diphosphooxymethyl)pyrimidine + 2 H(+) = thiamine phosphate + CO2 + diphosphate. It carries out the reaction 4-methyl-5-(2-phosphooxyethyl)-thiazole + 4-amino-2-methyl-5-(diphosphooxymethyl)pyrimidine + H(+) = thiamine phosphate + diphosphate. Its pathway is cofactor biosynthesis; thiamine diphosphate biosynthesis; thiamine phosphate from 4-amino-2-methyl-5-diphosphomethylpyrimidine and 4-methyl-5-(2-phosphoethyl)-thiazole: step 1/1. In terms of biological role, condenses 4-methyl-5-(beta-hydroxyethyl)thiazole monophosphate (THZ-P) and 2-methyl-4-amino-5-hydroxymethyl pyrimidine pyrophosphate (HMP-PP) to form thiamine monophosphate (TMP). The chain is Thiamine-phosphate synthase from Listeria monocytogenes serovar 1/2a (strain ATCC BAA-679 / EGD-e).